The sequence spans 538 residues: CTP synthase (538 aa).

Residues 1–266 are amidoligase domain; the sequence is MKTKFIFVTG…DDQVVDKLNI (266 aa). S14 lines the CTP pocket. S14 contributes to the UTP binding site. Residues 15-20 and D72 contribute to the ATP site; that span reads SIGKGL. Mg(2+)-binding residues include D72 and E140. CTP is bound by residues 147-149, 187-192, and K223; these read DIE and KTKPTQ. UTP-binding positions include 187–192 and K223; that span reads KTKPTQ. The 243-residue stretch at 292 to 534 folds into the Glutamine amidotransferase type-1 domain; sequence HIAIVGKYVN…IAAALEHRGK (243 aa). G354 lines the L-glutamine pocket. The active-site Nucleophile; for glutamine hydrolysis is the C381. L-glutamine contacts are provided by residues 382–385, E405, and R462; that span reads LGMQ. Residues H507 and E509 contribute to the active site.

It belongs to the CTP synthase family. Homotetramer.

It carries out the reaction UTP + L-glutamine + ATP + H2O = CTP + L-glutamate + ADP + phosphate + 2 H(+). The catalysed reaction is L-glutamine + H2O = L-glutamate + NH4(+). The enzyme catalyses UTP + NH4(+) + ATP = CTP + ADP + phosphate + 2 H(+). Its pathway is pyrimidine metabolism; CTP biosynthesis via de novo pathway; CTP from UDP: step 2/2. Allosterically activated by GTP, when glutamine is the substrate; GTP has no effect on the reaction when ammonia is the substrate. The allosteric effector GTP functions by stabilizing the protein conformation that binds the tetrahedral intermediate(s) formed during glutamine hydrolysis. Inhibited by the product CTP, via allosteric rather than competitive inhibition. Its function is as follows. Catalyzes the ATP-dependent amination of UTP to CTP with either L-glutamine or ammonia as the source of nitrogen. Regulates intracellular CTP levels through interactions with the four ribonucleotide triphosphates. In Geobacter metallireducens (strain ATCC 53774 / DSM 7210 / GS-15), this protein is CTP synthase.